Here is a 94-residue protein sequence, read N- to C-terminus: Putative pterin-4-alpha-carbinolamine dehydratase (94 aa).

The protein belongs to the pterin-4-alpha-carbinolamine dehydratase family.

The enzyme catalyses (4aS,6R)-4a-hydroxy-L-erythro-5,6,7,8-tetrahydrobiopterin = (6R)-L-erythro-6,7-dihydrobiopterin + H2O. The sequence is that of Putative pterin-4-alpha-carbinolamine dehydratase from Mycobacterium tuberculosis (strain ATCC 25177 / H37Ra).